Consider the following 366-residue polypeptide: MSGNTLGLLFSVTTFGESHGPAIGAVIDGCPPGMALSAEDIQPDLDRRKPGTSRHVTQRKEEDLVEILSGVFEGKTTGTPICLLIRNTDQRSKDYGNIVETFRPGHADYTYWHKYGIRDPRGGGRSSARLTAPVVAAGAVAKKWLREKFGVEIHGYMSQLGEIRIPFLDWNEVPNNPFFAPNAEILPELETYMDALRRDGDSVGARIEVVATGMPVGWGEPLFDRLDADIAHAMMGLNAVKGVEIGAGFHAVSQRGSEHGDELTPAGFVGNNAGGILGGISTGQDISVSLAIKPTSSIRTPRRSIDKAGEPTAVETFGRHDPCVGIRATPIAEALLALVLTDHALRHRAQCGDVAVATPAIAAKAP.

2 residues coordinate NADP(+): R48 and R54. FMN contacts are provided by residues 125-127 (RSS), 238-239 (NA), G278, 293-297 (KPTSS), and R319.

This sequence belongs to the chorismate synthase family. As to quaternary structure, homotetramer. Requires FMNH2 as cofactor.

It catalyses the reaction 5-O-(1-carboxyvinyl)-3-phosphoshikimate = chorismate + phosphate. Its pathway is metabolic intermediate biosynthesis; chorismate biosynthesis; chorismate from D-erythrose 4-phosphate and phosphoenolpyruvate: step 7/7. Its function is as follows. Catalyzes the anti-1,4-elimination of the C-3 phosphate and the C-6 proR hydrogen from 5-enolpyruvylshikimate-3-phosphate (EPSP) to yield chorismate, which is the branch point compound that serves as the starting substrate for the three terminal pathways of aromatic amino acid biosynthesis. This reaction introduces a second double bond into the aromatic ring system. This is Chorismate synthase from Ralstonia nicotianae (strain ATCC BAA-1114 / GMI1000) (Ralstonia solanacearum).